Consider the following 779-residue polypeptide: Translation initiation factor IF-2 (779 aa).

The disordered stretch occupies residues 44-193 (RQLDNAVDGT…TPPKPKELPE (150 aa)). The span at 53–65 (TNKKAEAPKKETT) shows a compositional bias: basic and acidic residues. The span at 66-81 (SNENGNSKGPNKPNMT) shows a compositional bias: polar residues. Low complexity-rich tracts occupy residues 82 to 93 (NSNEKSNKPNKP) and 117 to 167 (ANTS…NNKG). Residues 280 to 449 (ERPPVVTIMG…LLVSEVEELK (170 aa)) form the tr-type G domain. Positions 289–296 (GHVDHGKT) are G1. 289–296 (GHVDHGKT) provides a ligand contact to GTP. The segment at 314-318 (GITQH) is G2. Residues 335 to 338 (DTPG) form a G3 region. Residues 335–339 (DTPGH) and 389–392 (NKID) each bind GTP. Residues 389-392 (NKID) are G4. Residues 425–427 (SAK) form a G5 region.

Belongs to the TRAFAC class translation factor GTPase superfamily. Classic translation factor GTPase family. IF-2 subfamily.

The protein resides in the cytoplasm. One of the essential components for the initiation of protein synthesis. Protects formylmethionyl-tRNA from spontaneous hydrolysis and promotes its binding to the 30S ribosomal subunits. Also involved in the hydrolysis of GTP during the formation of the 70S ribosomal complex. The chain is Translation initiation factor IF-2 from Listeria monocytogenes serovar 1/2a (strain ATCC BAA-679 / EGD-e).